A 509-amino-acid chain; its full sequence is Glycogen synthase (509 aa).

Lysine 47 provides a ligand contact to ADP-alpha-D-glucose.

This sequence belongs to the glycosyltransferase 1 family. Bacterial/plant glycogen synthase subfamily.

It carries out the reaction [(1-&gt;4)-alpha-D-glucosyl](n) + ADP-alpha-D-glucose = [(1-&gt;4)-alpha-D-glucosyl](n+1) + ADP + H(+). It participates in glycan biosynthesis; glycogen biosynthesis. In terms of biological role, synthesizes alpha-1,4-glucan chains using ADP-glucose. The chain is Glycogen synthase from Xanthomonas euvesicatoria pv. vesicatoria (strain 85-10) (Xanthomonas campestris pv. vesicatoria).